Here is a 351-residue protein sequence, read N- to C-terminus: F-box protein At1g47810 (351 aa).

The F-box domain occupies 8–54 (LQSLDPIPVDVLFEIFLNLPAKFLARFVCVSKLWAKIIRNQDFIRSF).

The protein is F-box protein At1g47810 of Arabidopsis thaliana (Mouse-ear cress).